Reading from the N-terminus, the 271-residue chain is Cyclase-like protein 3 (271 aa).

The first 21 residues, 1-21 (MYHLLIIITTLSFSSINITFA), serve as a signal peptide directing secretion.

The protein belongs to the Cyclase 1 superfamily.

It localises to the secreted. Its subcellular location is the extracellular space. The protein localises to the extracellular matrix. This is Cyclase-like protein 3 from Arabidopsis thaliana (Mouse-ear cress).